A 331-amino-acid chain; its full sequence is Type 2 lactosamine alpha-2,3-sialyltransferase (331 aa).

The Cytoplasmic segment spans residues 1-4; it reads MRGY. Residues 5 to 25 traverse the membrane as a helical; Signal-anchor for type II membrane protein segment; the sequence is LVAIFLSAVFLYYVLHCILWG. The Lumenal portion of the chain corresponds to 26-331; it reads TNVYWVAPVE…KNLVINLTQD (306 aa). Residues Asn129, Asn181, Asn282, Asn295, Asn308, and Asn327 are each glycosylated (N-linked (GlcNAc...) asparagine).

It belongs to the glycosyltransferase 29 family. Ubiquitous.

It localises to the golgi apparatus membrane. It catalyses the reaction a neolactoside nLc4Cer(d18:1(4E)) + CMP-N-acetyl-beta-neuraminate = a neolactoside IV(3)-alpha-NeuAc-nLc4Cer(d18:1(4E)) + CMP + H(+). It carries out the reaction a beta-D-galactosyl-(1-&gt;4)-N-acetyl-beta-D-glucosaminyl derivative + CMP-N-acetyl-beta-neuraminate = an N-acetyl-alpha-neuraminyl-(2-&gt;3)-beta-D-galactosyl-(1-&gt;4)-N-acetyl-beta-D-glucosaminyl derivative + CMP + H(+). The catalysed reaction is a neolactoside nLc6Cer(d18:1(4E)) + CMP-N-acetyl-beta-neuraminate = a neolactoside VI(3)-alpha-NeuNAc-nLc6Cer(d18:1(4E)) + CMP + H(+). Functionally, transfers the sialyl residue from CMP-N-acetyl-beta-neuraminate to the terminal galactose residue on sugar chains of glycoproteins and glycolipids. It's alpha-2,3-sialyltransferase activity is specific toward type II glycan chains (Galbeta1-4GlcNAc) on glycoproteins and glycolipids such as neolactosides nLc4Cer and nLc6Cer, whose sialyl-products serve as precursors for the Lewis X antigen. Critically involved in the synthesis of functional selectin ligands needed for neutrophil recruitment during inflammation and lymphocyte homing to the lymph nodes. The chain is Type 2 lactosamine alpha-2,3-sialyltransferase (ST3GAL6) from Homo sapiens (Human).